Reading from the N-terminus, the 312-residue chain is Peroxidase (312 aa).

An N-terminal signal peptide occupies residues 1–23; it reads MAMGSASCISLVVLVALATAASG. At Q24 the chain carries Pyrrolidone carboxylic acid. 4 disulfides stabilise this stretch: C34–C107, C67–C70, C113–C307, and C192–C218. H65 acts as the Proton acceptor in catalysis. D66, G69, D71, and S73 together coordinate Ca(2+). P155 is a binding site for substrate. Position 185 (H185) interacts with heme b. T186 is a binding site for Ca(2+). Positions 231, 234, and 239 each coordinate Ca(2+). N262 is a glycosylation site (N-linked (GlcNAc...) asparagine).

The protein belongs to the peroxidase family. Classical plant (class III) peroxidase subfamily. Ca(2+) serves as cofactor. Requires heme b as cofactor. Root.

The protein localises to the secreted. The catalysed reaction is 2 a phenolic donor + H2O2 = 2 a phenolic radical donor + 2 H2O. Its function is as follows. Removal of H(2)O(2), oxidation of toxic reductants, biosynthesis and degradation of lignin, suberization, auxin catabolism, response to environmental stresses such as wounding, pathogen attack and oxidative stress. These functions might be dependent on each isozyme/isoform in each plant tissue. Functionally, involved in defense response to powdery meldew fungus. In Triticum aestivum (Wheat), this protein is Peroxidase.